We begin with the raw amino-acid sequence, 120 residues long: Nitrogen regulatory protein GlnK1 (120 aa).

ADP is bound by residues Thr40, Gly48 to Gln50, Val75, and Gly98 to Arg101. ATP contacts are provided by residues Thr40, Gly48–Gln50, Val75, and Gly98–Arg101.

It belongs to the P(II) protein family. As to quaternary structure, homotrimer. Interacts and forms a complex with Amt1.

It localises to the cytoplasm. Involved in the regulation of nitrogen metabolism. Regulates the activity of its targets by protein-protein interaction in response to the nitrogen status of the cell. Regulates the activity of the ammonia channel Amt1 via direct interaction. This chain is Nitrogen regulatory protein GlnK1, found in Archaeoglobus fulgidus (strain ATCC 49558 / DSM 4304 / JCM 9628 / NBRC 100126 / VC-16).